The sequence spans 380 residues: Cytochrome b (380 aa).

A run of 4 helical transmembrane segments spans residues 34–54 (FGSLLAVCLATQILTGLLLAM), 78–99 (WLIRNLHANGASFFFICIFLHI), 114–134 (WNTGVILLLTLMATAFVGYVL), and 179–199 (FFALHFLLPFVIAGITIIHLT). Histidine 84 and histidine 98 together coordinate heme b. Residues histidine 183 and histidine 197 each contribute to the heme b site. An a ubiquinone-binding site is contributed by histidine 202. 4 helical membrane-spanning segments follow: residues 227-247 (LKDILGLALMFIPFLALALFS), 289-309 (LGGVLALAASVLILLLIPFLH), 321-341 (LSQILFWLLVANLLVLTWIGS), and 348-368 (FIIIGQVASFSYFNILLILFP).

It belongs to the cytochrome b family. In terms of assembly, the cytochrome bc1 complex contains 11 subunits: 3 respiratory subunits (MT-CYB, CYC1 and UQCRFS1), 2 core proteins (UQCRC1 and UQCRC2) and 6 low-molecular weight proteins (UQCRH/QCR6, UQCRB/QCR7, UQCRQ/QCR8, UQCR10/QCR9, UQCR11/QCR10 and a cleavage product of UQCRFS1). This cytochrome bc1 complex then forms a dimer. Heme b serves as cofactor.

The protein localises to the mitochondrion inner membrane. Its function is as follows. Component of the ubiquinol-cytochrome c reductase complex (complex III or cytochrome b-c1 complex) that is part of the mitochondrial respiratory chain. The b-c1 complex mediates electron transfer from ubiquinol to cytochrome c. Contributes to the generation of a proton gradient across the mitochondrial membrane that is then used for ATP synthesis. This Polyplectron bicalcaratum (Grey peacock-pheasant) protein is Cytochrome b (MT-CYB).